We begin with the raw amino-acid sequence, 415 residues long: Mannosylglycerate hydrolase (415 aa).

Substrate is bound by residues Tyr-23, 27 to 30 (WLWD), Tyr-76, Gln-98, and Gly-158. The active-site Proton donor is the Asp-160. Substrate contacts are provided by residues Arg-193 and 344-345 (YW). Residue Glu-388 is the Proton acceptor of the active site.

Belongs to the glycosyl hydrolase 63 family. Homotetramer in solution.

The catalysed reaction is (2R)-2-O-(alpha-D-mannosyl)-glycerate + H2O = D-mannose + (R)-glycerate. It catalyses the reaction (2R)-2-O-(alpha-D-glucopyranosyl)-glycerate + H2O = (R)-glycerate + D-glucose. With respect to regulation, activity is not stimulated by divalent cations and not affected in the presence of EDTA. Its function is as follows. Hydrolase that catalyzes the hydrolysis of mannosylglycerate (MG), a solute produced in response to osmotic stress in thermophiles, into mannose and glycerate. Can also hydrolyze glucosylglycerate (GG) to glucose and glycerate, with similar catalytic efficiency. Is highly specific for MG and GG, and cannot use mannosylglyceramide (MGA), glucosylglycerol, mannosylglucosylglycerate (MGG), glucosylglucosylglycerate (GGG) or trehalose as substrates. The polypeptide is Mannosylglycerate hydrolase (Thermus thermophilus (strain ATCC BAA-163 / DSM 7039 / HB27)).